The sequence spans 291 residues: G1/S-specific cyclin-D1 (291 aa).

Residue T282 is modified to Phosphothreonine.

Belongs to the cyclin family. Cyclin D subfamily. Interacts with the cdk4 and cdk6 protein kinases to form a serine/threonine kinase holoenzyme complex. The cyclin subunit imparts substrate specificity to the complex. In terms of processing, phosphorylation at Thr-282 by MAP kinases is required for ubiquitination and degradation by the DCX(AMBRA1) complex. Post-translationally, ubiquitinated by the DCX(AMBRA1) complex during the transition from G1 to S cell phase, leading to its degradation. The DCX(AMBRA1) complex represents the major regulator of CCND1 stability during the G1/S transition.

Its subcellular location is the nucleus. It is found in the cytoplasm. Regulatory component of the cyclin D1-CDK4 (DC) complex that phosphorylates and inhibits members of the retinoblastoma (RB) protein family including RB1 and regulates the cell-cycle during G(1)/S transition. Phosphorylation of RB1 allows dissociation of the transcription factor E2F from the RB/E2F complex and the subsequent transcription of E2F target genes which are responsible for the progression through the G(1) phase. Hypophosphorylates RB1 in early G(1) phase. Cyclin D-CDK4 complexes are major integrators of various mitogenenic and antimitogenic signals. The chain is G1/S-specific cyclin-D1 (ccnd1) from Xenopus laevis (African clawed frog).